A 131-amino-acid polypeptide reads, in one-letter code: Small ribosomal subunit protein uS8 (131 aa).

Belongs to the universal ribosomal protein uS8 family. As to quaternary structure, part of the 30S ribosomal subunit. Contacts proteins S5 and S12.

In terms of biological role, one of the primary rRNA binding proteins, it binds directly to 16S rRNA central domain where it helps coordinate assembly of the platform of the 30S subunit. The protein is Small ribosomal subunit protein uS8 of Delftia acidovorans (strain DSM 14801 / SPH-1).